A 352-amino-acid polypeptide reads, in one-letter code: Putative [LysW]-L-2-aminoadipate/[LysW]-L-glutamate phosphate reductase (352 aa).

NADP(+) contacts are provided by residues 10-13 (SGFT) and 34-36 (SRR). The active site involves cysteine 151. Residue asparagine 319 coordinates NADP(+).

Belongs to the NAGSA dehydrogenase family. Type 1 subfamily. LysY sub-subfamily.

It localises to the cytoplasm. It catalyses the reaction [amino-group carrier protein]-C-terminal-N-(1-carboxy-5-oxopentan-1-yl)-L-glutamine + phosphate + NADP(+) = [amino-group carrier protein]-C-terminal-N-(1-carboxy-5-phosphooxy-5-oxopentan-1-yl)-L-glutamine + NADPH + H(+). The enzyme catalyses [amino-group carrier protein]-C-terminal-gamma-(L-glutamyl-5-semialdehyde)-L-glutamate + phosphate + NADP(+) = [amino-group carrier protein]-C-terminal-gamma-(5-phospho-L-glutamyl)-L-glutamate + NADPH + H(+). It participates in amino-acid biosynthesis; L-lysine biosynthesis via AAA pathway; L-lysine from L-alpha-aminoadipate (Thermus route): step 3/5. The protein operates within amino-acid biosynthesis; L-arginine biosynthesis. Functionally, involved in both the arginine and lysine biosynthetic pathways. The polypeptide is Putative [LysW]-L-2-aminoadipate/[LysW]-L-glutamate phosphate reductase (Pyrobaculum islandicum (strain DSM 4184 / JCM 9189 / GEO3)).